The primary structure comprises 271 residues: Orotidine 5'-phosphate decarboxylase (271 aa).

Catalysis depends on lysine 95, which acts as the Proton donor.

The protein belongs to the OMP decarboxylase family. Type 2 subfamily.

The catalysed reaction is orotidine 5'-phosphate + H(+) = UMP + CO2. Its pathway is pyrimidine metabolism; UMP biosynthesis via de novo pathway; UMP from orotate: step 2/2. This Ralstonia pickettii (strain 12J) protein is Orotidine 5'-phosphate decarboxylase.